A 70-amino-acid chain; its full sequence is Large ribosomal subunit protein eL43 (70 aa).

Zn(2+) contacts are provided by cysteine 36, cysteine 39, cysteine 55, and cysteine 58. The C4-type zinc-finger motif lies at 36–58; that stretch reads CPVCKTTGKVVRIASGVWYCKKC.

Belongs to the eukaryotic ribosomal protein eL43 family. Putative zinc-binding subfamily. As to quaternary structure, part of the 50S ribosomal subunit. Zn(2+) serves as cofactor.

Functionally, binds to the 23S rRNA. This is Large ribosomal subunit protein eL43 from Sulfurisphaera tokodaii (strain DSM 16993 / JCM 10545 / NBRC 100140 / 7) (Sulfolobus tokodaii).